The following is a 109-amino-acid chain: Nucleoid-associated protein ETA_24730 (109 aa).

This sequence belongs to the YbaB/EbfC family. Homodimer.

Its subcellular location is the cytoplasm. It is found in the nucleoid. Functionally, binds to DNA and alters its conformation. May be involved in regulation of gene expression, nucleoid organization and DNA protection. The polypeptide is Nucleoid-associated protein ETA_24730 (Erwinia tasmaniensis (strain DSM 17950 / CFBP 7177 / CIP 109463 / NCPPB 4357 / Et1/99)).